We begin with the raw amino-acid sequence, 500 residues long: Glycerol kinase (500 aa).

Residue threonine 12 participates in ADP binding. Residues threonine 12, threonine 13, and serine 14 each coordinate ATP. Residue threonine 12 participates in sn-glycerol 3-phosphate binding. Arginine 16 contributes to the ADP binding site. Residues arginine 82, glutamate 83, tyrosine 134, and aspartate 243 each contribute to the sn-glycerol 3-phosphate site. Glycerol contacts are provided by arginine 82, glutamate 83, tyrosine 134, aspartate 243, and glutamine 244. ADP is bound by residues threonine 265 and glycine 308. Residues threonine 265, glycine 308, glutamine 312, and glycine 411 each coordinate ATP. Glycine 411 contributes to the ADP binding site.

The protein belongs to the FGGY kinase family.

The catalysed reaction is glycerol + ATP = sn-glycerol 3-phosphate + ADP + H(+). It functions in the pathway polyol metabolism; glycerol degradation via glycerol kinase pathway; sn-glycerol 3-phosphate from glycerol: step 1/1. Its activity is regulated as follows. Inhibited by fructose 1,6-bisphosphate (FBP). Key enzyme in the regulation of glycerol uptake and metabolism. Catalyzes the phosphorylation of glycerol to yield sn-glycerol 3-phosphate. The sequence is that of Glycerol kinase from Chelativorans sp. (strain BNC1).